The chain runs to 253 residues: Tryptophan synthase alpha chain (253 aa).

Active-site proton acceptor residues include E45 and D56.

The protein belongs to the TrpA family. As to quaternary structure, tetramer of two alpha and two beta chains.

It carries out the reaction (1S,2R)-1-C-(indol-3-yl)glycerol 3-phosphate + L-serine = D-glyceraldehyde 3-phosphate + L-tryptophan + H2O. It functions in the pathway amino-acid biosynthesis; L-tryptophan biosynthesis; L-tryptophan from chorismate: step 5/5. Functionally, the alpha subunit is responsible for the aldol cleavage of indoleglycerol phosphate to indole and glyceraldehyde 3-phosphate. The chain is Tryptophan synthase alpha chain from Flavobacterium johnsoniae (strain ATCC 17061 / DSM 2064 / JCM 8514 / BCRC 14874 / CCUG 350202 / NBRC 14942 / NCIMB 11054 / UW101) (Cytophaga johnsonae).